A 1517-amino-acid polypeptide reads, in one-letter code: uncharacterized protein (1517 aa).

Residues 1 to 13 (MNQFPNQPGNFGQ) are compositionally biased toward polar residues. The disordered stretch occupies residues 1-26 (MNQFPNQPGNFGQNYYKPVQGSIPAN). Asn-35, Asn-40, and Asn-76 each carry an N-linked (GlcNAc...) asparagine glycan. Transmembrane regions (helical) follow at residues 231–251 (AIDF…AVPI), 397–417 (AIGL…TVWC), 510–530 (FVPL…KDWI), 612–632 (PNIV…FFAL), and 720–740 (VFDC…VVLL). Asn-917 carries an N-linked (GlcNAc...) asparagine glycan. Helical transmembrane passes span 956 to 976 (FVYA…VPPL), 985 to 1005 (VPAF…VNSE), 1051 to 1071 (VKLD…AFWS), and 1114 to 1134 (GIGF…TYLL). Asn-1178 is a glycosylation site (N-linked (GlcNAc...) asparagine). A helical transmembrane segment spans residues 1261-1281 (PYALPLLDSGMVPVSTQLAIV). An N-linked (GlcNAc...) asparagine glycan is attached at Asn-1321. The next 2 membrane-spanning stretches (helical) occupy residues 1353–1373 (APVV…TFEV) and 1408–1428 (VVVV…PVVI).

To S.pombe SpAC22F3.04.

It is found in the membrane. This is an uncharacterized protein from Schizosaccharomyces pombe (strain 972 / ATCC 24843) (Fission yeast).